Consider the following 607-residue polypeptide: Serine/threonine-protein kinase sid2 (607 aa).

4 positions are modified to phosphoserine: Ser-56, Ser-60, Ser-65, and Ser-86. Residues 93-108 show a composition bias toward basic and acidic residues; it reads DRSGELSYKDNNHWSD. Residues 93-118 are disordered; it reads DRSGELSYKDNNHWSDRSSTGSPRWE. The segment covering 109–118 has biased composition (polar residues); sequence RSSTGSPRWE. A Protein kinase domain is found at 208-508; sequence FQTITQVGQG…LKQVMQHPYF (301 aa). Residues 214–222 and Lys-237 each bind ATP; that span reads VGQGGYGSV. Tyr-219 bears the Phosphotyrosine mark. Asp-331 serves as the catalytic Proton acceptor. Residue Ser-402 is modified to Phosphoserine. The 81-residue stretch at 509–589 folds into the AGC-kinase C-terminal domain; the sequence is SKIDWKNVRT…RHQKNSHPTS (81 aa). Residues 586-607 form a disordered region; that stretch reads HPTSSSSALSSPLSAPSFGTLL. Over residues 589-607 the composition is skewed to low complexity; the sequence is SSSSALSSPLSAPSFGTLL.

Belongs to the protein kinase superfamily. Ser/Thr protein kinase family. Interacts with mob1 and cdc11.

It is found in the cytoplasm. It localises to the cytoskeleton. The protein localises to the microtubule organizing center. Its subcellular location is the spindle pole body. The catalysed reaction is L-seryl-[protein] + ATP = O-phospho-L-seryl-[protein] + ADP + H(+). It carries out the reaction L-threonyl-[protein] + ATP = O-phospho-L-threonyl-[protein] + ADP + H(+). Its function is as follows. Part of a signaling pathway. Required for initiation of medial ring constriction and septation. This Schizosaccharomyces pombe (strain 972 / ATCC 24843) (Fission yeast) protein is Serine/threonine-protein kinase sid2 (sid2).